A 311-amino-acid polypeptide reads, in one-letter code: Probable hydrogen peroxide-inducible genes activator (311 aa).

The HTH lysR-type domain maps to 8-65 (PTIAGLRAFVAVVEKGHFSAAASFLGVRQSTLSQALAALESGLGVQLIERSTRRVFVT). The segment at residues 25 to 44 (FSAAASFLGVRQSTLSQALA) is a DNA-binding region (H-T-H motif).

This sequence belongs to the LysR transcriptional regulatory family.

Its function is as follows. Required for the induction the katG gene for catalase. Involved in the response to hydrogen peroxide. The sequence is that of Probable hydrogen peroxide-inducible genes activator (oxyR) from Mycobacterium leprae (strain TN).